The sequence spans 727 residues: Telomere repeats-binding bouquet formation protein 1 (727 aa).

ARM repeat units follow at residues 101–144 (ELFE…RETG) and 339–382 (NGLP…GEYP). Positions 398-446 (ENNLEEHWRKAKEILHRIEQLEREGNEEEIQRENYQDNISSMNISIQNT) form a coiled coil. The span at 457–468 (RGSKAEDEDKSH) shows a compositional bias: basic and acidic residues. Residues 457-493 (RGSKAEDEDKSHSRQLQSYKSHGVMSKACTNDDQMKT) are disordered. The interaction with TERF1 stretch occupies residues 523 to 662 (QNLHEETTFE…QRLSNESTTP (140 aa)). T648 is subject to Phosphothreonine. The region spanning 666-719 (KKRRIRKNFTEEEVNYLFNGVKKMGNHWNSILWSFPFQQGRKAVDLAHKYHKLT) is the Myb-like domain.

This sequence belongs to the TERB1 family. In terms of assembly, component of the MAJIN-TERB1-TERB2 complex, composed of MAJIN, TERB1 and TERB2. Interacts with TERF1, STAG3 and SUN1. Interacts (via Myb-like domain) with the cohesin complex; probably mediated via interaction with STAG3. In terms of processing, phosphorylated by CDK. Phosphorylation by CDK takes place in late prophase when the cap exchange is prominent. is important for the stabilization of telomere attachment but dispenable for the cap exchange.

The protein localises to the chromosome. It is found in the telomere. It localises to the nucleus inner membrane. Meiosis-specific telomere-associated protein involved in meiotic telomere attachment to the nucleus inner membrane, a crucial step for homologous pairing and synapsis. Component of the MAJIN-TERB1-TERB2 complex, which promotes telomere cap exchange by mediating attachment of telomeric DNA to the inner nuclear membrane and replacement of the protective cap of telomeric chromosomes: in early meiosis, the MAJIN-TERB1-TERB2 complex associates with telomeric DNA and the shelterin/telosome complex. During prophase, the complex matures and promotes release of the shelterin/telosome complex from telomeric DNA. In the MAJIN-TERB1-TERB2 complex, TERB1 probably mediates association with the shelterin/telosome complex via interaction with TERF1, promoting priming telomeric DNA attachment'. Promotes telomere association with the nuclear envelope and deposition of the SUN-KASH/LINC complex. Also recruits cohesin to telomeres to develop structural rigidity. The protein is Telomere repeats-binding bouquet formation protein 1 of Homo sapiens (Human).